Reading from the N-terminus, the 2768-residue chain is Thyroglobulin (2768 aa).

An N-terminal signal peptide occupies residues 1 to 20 (MMTLVLWVSTLLSSVCLVAA). At Tyr-25 the chain carries Iodotyrosine; alternate. The residue at position 25 (Tyr-25) is a Sulfotyrosine; alternate. Tyr-25 bears the Thyroxine; alternate mark. Tyr-25 carries the triiodothyronine; alternate modification. 4 Thyroglobulin type-1 domains span residues 32-93 (LRPC…PTAC), 94-161 (LSFC…PTRC), 162-298 (PRSC…RFRC), and 299-359 (PTKC…PLFC). Intrachain disulfides connect Cys-35–Cys-53, Cys-64–Cys-71, Cys-73–Cys-93, Cys-97–Cys-121, Cys-132–Cys-139, Cys-141–Cys-161, Cys-165–Cys-184, and Cys-195–Cys-236. Tyr-109 carries the post-translational modification Iodotyrosine. An N-linked (GlcNAc...) asparagine glycan is attached at Asn-111. Residue Tyr-150 is modified to Iodotyrosine; alternate. Tyr-150 carries the diiodotyrosine; alternate modification. Asn-199 carries N-linked (GlcNAc...) asparagine glycosylation. An iodotyrosine mark is found at Tyr-235 and Tyr-259. Cystine bridges form between Cys-302–Cys-320, Cys-331–Cys-337, Cys-339–Cys-365, Cys-408–Cys-608, Cys-631–Cys-636, Cys-638–Cys-658, Cys-662–Cys-687, and Cys-698–Cys-703. 3 N-linked (GlcNAc...) asparagine glycosylation sites follow: Asn-484, Asn-496, and Asn-545. 6 consecutive Thyroglobulin type-1 domains span residues 605 to 658 (AQAC…HPRC), 659 to 726 (PTKC…PKLC), 727 to 922 (PSVC…IPAC), 923 to 1074 (PGPC…MPQC), 1075 to 1146 (PTSC…SAQC), and 1147 to 1211 (PGLC…QPAC). An Iodotyrosine; alternate modification is found at Tyr-704. The residue at position 704 (Tyr-704) is a Thyroxine; alternate. Tyr-704 is modified (triiodothyronine; alternate). Tyr-704 bears the Diiodotyrosine; alternate mark. Cystine bridges form between Cys-705–Cys-726, Cys-730–Cys-763, Cys-774–Cys-899, Cys-901–Cys-922, Cys-926–Cys-1032, Cys-1043–Cys-1050, Cys-1052–Cys-1074, Cys-1078–Cys-1109, Cys-1127–Cys-1146, Cys-1150–Cys-1170, Cys-1182–Cys-1189, Cys-1191–Cys-1211, Cys-1216–Cys-1265, Cys-1232–Cys-1246, Cys-1306–Cys-1356, and Cys-1331–Cys-1347. Asn-748 carries an N-linked (GlcNAc...) asparagine glycan. At Tyr-785 the chain carries Iodotyrosine. Residue Asn-817 is glycosylated (N-linked (GlcNAc...) asparagine). Position 867 is an iodotyrosine; alternate (Tyr-867). Diiodotyrosine; alternate is present on Tyr-867. Position 884 is a diiodotyrosine (Tyr-884). An N-linked (GlcNAc...) asparagine glycan is attached at Asn-948. An Iodotyrosine; alternate modification is found at Tyr-993. The residue at position 993 (Tyr-993) is a Diiodotyrosine; alternate. An N-linked (GlcNAc...) asparagine glycan is attached at Asn-1017. Asn-1141 carries N-linked (GlcNAc...) asparagine glycosylation. At Tyr-1310 the chain carries Iodotyrosine. Tyr-1310 carries the post-translational modification Thyroxine. N-linked (GlcNAc...) asparagine glycosylation is found at Asn-1349 and Asn-1365. Cystine bridges form between Cys-1441/Cys-1458, Cys-1461/Cys-1472, Cys-1475/Cys-1489, Cys-1492/Cys-1509, Cys-1513/Cys-1522, Cys-1542/Cys-1564, Cys-1602/Cys-1626, Cys-1606/Cys-1612, and Cys-1638/Cys-1661. 3 Type II repeats span residues 1455 to 1468 (PLGC…SFSQ), 1469 to 1485 (DGKC…GQAG), and 1486 to 1502 (SSAC…TITG). One can recognise a Thyroglobulin type-1 11 domain in the interval 1510–1564 (VTDCQRDEAGLQCDQNGQYQANQKDMDSGEVFCVDSEGQRLQWLQTEAGLSESQC). The Type IIIA repeat unit spans residues 1602–1722 (CLADCADDEA…GTNLTDTHLF (121 aa)). N-linked (GlcNAc...) asparagine glycosylation is present at Asn-1715. Disulfide bonds link Cys-1723–Cys-1748, Cys-1727–Cys-1733, Cys-1732–Cys-1834, and Cys-1759–Cys-1776. Residues 1723-1891 (CLLACDQDSC…LFSAEQANLW (169 aa)) form a Type IIIB repeat. N-linked (GlcNAc...) asparagine glycosylation is found at Asn-1773 and Asn-1866. Cystine bridges form between Cys-1892/Cys-1918, Cys-1896/Cys-1903, Cys-1927/Cys-1938, Cys-1995/Cys-2023, Cys-1999/Cys-2005, Cys-2004/Cys-2075, and Cys-2034/Cys-2047. One copy of the Type IIIA repeat lies at 1892 to 1994 (CLSRCAQEPV…EKLISNGFFE (103 aa)). A glycan (N-linked (GlcNAc...) asparagine) is linked at Asn-1937. Residues 1995 to 2127 (CERLCDRDPC…SATRNFSLAQ (133 aa)) form a Type IIIB repeat. An N-linked (GlcNAc...) asparagine glycan is attached at Asn-2012. Asn-2122 carries N-linked (GlcNAc...) asparagine glycosylation. The stretch at 2128-2185 (DFCLQECSRHQDCLVTTLQIQQGVVRCVFYPDIQSCEHSLRSKTCWLLLHEEAAYIYR) is one Type IIIA repeat. Intrachain disulfides connect Cys-2130-Cys-2154, Cys-2134-Cys-2140, and Cys-2163-Cys-2172. Tyr-2184 is modified (iodotyrosine). Positions 2188–2768 (GAPLHQSDGI…LEPVPKSYSK (581 aa)) are cholinesterase-like (ChEL). Asn-2251 carries N-linked (GlcNAc...) asparagine glycosylation. Cys-2265 and Cys-2282 form a disulfide bridge. 2 N-linked (GlcNAc...) asparagine glycosylation sites follow: Asn-2296 and Asn-2445. Cys-2443 and Cys-2454 are disulfide-bonded. At Tyr-2541 the chain carries Thyroxine. Position 2574 is an iodotyrosine; alternate (Tyr-2574). Tyr-2574 carries the thyroxine; alternate modification. Position 2574 is a triiodothyronine; alternate (Tyr-2574). Tyr-2574 carries the post-translational modification Diiodotyrosine; alternate. Asn-2583 is a glycosylation site (N-linked (GlcNAc...) asparagine). Tyr-2588 and Tyr-2618 each carry iodotyrosine. Cys-2592 and Cys-2716 are joined by a disulfide. The residue at position 2698 (Tyr-2698) is a Diiodotyrosine. Positions 2731 to 2768 (GAKDAQLTKSGEEDLEVGPGSEEDFSGSLEPVPKSYSK) are disordered. Positions 2743–2755 (EDLEVGPGSEEDF) are enriched in acidic residues. An Iodotyrosine; alternate modification is found at Tyr-2766. Tyr-2766 bears the Thyroxine; alternate mark. Tyr-2766 is modified (triiodothyronine; alternate). The residue at position 2766 (Tyr-2766) is a Diiodotyrosine; alternate.

The protein belongs to the type-B carboxylesterase/lipase family. In terms of assembly, monomer. Homodimer (via ChEL region); occurs in the endoplasmic reticulum and is required for export to the Golgi apparatus. Homooligomer; disulfide-linked; stored in this form in the thyroid follicle lumen. Iodinated on tyrosine residues by TPO. There are 4 pairs of iodinated tyrosines used for coupling: acceptor Tyr-25 is coupled to donor Tyr-150 or Tyr-235, acceptor Tyr-2574 is coupled to donor Tyr-2541, acceptor Tyr-2766 in monomer 1 is coupled to donor Tyr-2766 in monomer 2 and acceptor Tyr-1310 in monomer 1 is coupled to donor Tyr-109 in monomer 2. Post-translationally, sulfated tyrosines are desulfated during iodination. In terms of processing, undergoes sequential proteolysis by cathepsins to release thyroxine (T4) and triiodothyronine (T3) hormones. In the thyroid follicle lumen, cross-linked TG (storage form) is solubilized by limited proteolysis mediated by cathepsins CTSB and/or CTSL. Partially cleaved TG is further processed by CTSK/cathepsin K and/or CTSL resulting in the release of thyroxine (T4). Following endocytosis, further processing occurs leading to the release of triiodothyronine (T3) and more T4 hormones. As to expression, specifically expressed in the thyroid gland.

The protein resides in the secreted. Acts as a substrate for the production of iodinated thyroid hormones thyroxine (T4) and triiodothyronine (T3). The synthesis of T3 and T4 involves iodination of selected tyrosine residues of TG/thyroglobulin followed by their oxidative coupling. Following TG re-internalization and lysosomal-mediated proteolysis, T3 and T4 are released from the polypeptide backbone leading to their secretion into the bloodstream. One dimer produces 7 thyroid hormone molecules. The protein is Thyroglobulin (Tg) of Rattus norvegicus (Rat).